The sequence spans 141 residues: Large ribosomal subunit protein uL11 (141 aa).

The protein belongs to the universal ribosomal protein uL11 family. Part of the ribosomal stalk of the 50S ribosomal subunit. Interacts with L10 and the large rRNA to form the base of the stalk. L10 forms an elongated spine to which L12 dimers bind in a sequential fashion forming a multimeric L10(L12)X complex. One or more lysine residues are methylated.

Forms part of the ribosomal stalk which helps the ribosome interact with GTP-bound translation factors. The polypeptide is Large ribosomal subunit protein uL11 (Aster yellows witches'-broom phytoplasma (strain AYWB)).